We begin with the raw amino-acid sequence, 252 residues long: 14-3-3 protein 7 (252 aa).

It belongs to the 14-3-3 family. In terms of assembly, homodimer.

This is 14-3-3 protein 7 (TFT7) from Solanum lycopersicum (Tomato).